The sequence spans 678 residues: ATP-dependent RNA helicase DHX58 (678 aa).

Residues 11 to 188 (IMPALEGKNI…DGAINHVLQL (178 aa)) form the Helicase ATP-binding domain. 24–31 (LPTGAGKT) lines the ATP pocket. The DECH box motif lies at 131-134 (DECH). The region spanning 350–514 (KLEMLEKILQ…QAVAAVQKMD (165 aa)) is the Helicase C-terminal domain. Positions 489 to 546 (ELKRELINEALETLMEQAVAAVQKMDQAEYQAKIRDLQQAALTKRAAQAAQRENQRQQ) form a coiled coil. The region spanning 539 to 669 (QRENQRQQFP…PDFDFLQHCA (131 aa)) is the RLR CTR domain. Zn(2+)-binding residues include cysteine 556, cysteine 559, cysteine 612, and cysteine 615. Residues 572 to 655 (VEGTHHVNVN…RIQAKKWSRV (84 aa)) form an RNA-binding region.

The protein belongs to the helicase family. RLR subfamily. Monomer in the absence of dsRNA. Homodimer in the presence of dsRNA. Interacts with RIGI (via CARD domain), MAVS/IPS1 and DDX60. Found in a complex with RIGI and IFIH1/MDA5. Interacts with ANKRD17. Directly interacts with ATG5 and ATG12, either as ATG5 and ATG12 monomers or as ATG12-ATG5 conjugates. As to quaternary structure, (Microbial infection) Interacts (via helicase C-terminal domain) with non-structural protein V of paramyxoviruses including human parainfluenza 2 virus, human parainfluenza 5 virus, measles virus, mumps virus, hendra virus and nipah virus. Expressed in testis, nerve and spleen. Also expressed in the brain.

It localises to the cytoplasm. It catalyses the reaction ATP + H2O = ADP + phosphate + H(+). Functionally, acts as a regulator of RIGI and IFIH1/MDA5 mediated antiviral signaling. Cannot initiate antiviral signaling as it lacks the CARD domain required for activating MAVS/IPS1-dependent signaling events. Can have both negative and positive regulatory functions related to RIGI and IFIH1/MDA5 signaling and this role in regulating signaling may be complex and could probably depend on characteristics of the infecting virus or target cells, or both. Its inhibitory action on RIG-I signaling may involve the following mechanisms: competition with RIGI for binding to the viral RNA, binding to RIGI and inhibiting its dimerization and interaction with MAVS/IPS1, competing with IKBKE in its binding to MAVS/IPS1 thereby inhibiting activation of interferon regulatory factor 3 (IRF3). Its positive regulatory role may involve unwinding or stripping nucleoproteins of viral RNA thereby facilitating their recognition by RIGI and IFIH1/MDA5. Involved in the innate immune response to various RNA viruses and some DNA viruses such as poxviruses and coronavirus SARS-CoV-2, and also to the bacterial pathogen Listeria monocytogenes. Can bind both ssRNA and dsRNA, with a higher affinity for dsRNA. Shows a preference to 5'-triphosphorylated RNA, although it can recognize RNA lacking a 5'-triphosphate. This is ATP-dependent RNA helicase DHX58 from Homo sapiens (Human).